Here is a 161-residue protein sequence, read N- to C-terminus: SsrA-binding protein (161 aa).

Positions His137–Arg161 are disordered. Residues Lys139–Arg154 are compositionally biased toward basic and acidic residues.

This sequence belongs to the SmpB family.

The protein localises to the cytoplasm. Its function is as follows. Required for rescue of stalled ribosomes mediated by trans-translation. Binds to transfer-messenger RNA (tmRNA), required for stable association of tmRNA with ribosomes. tmRNA and SmpB together mimic tRNA shape, replacing the anticodon stem-loop with SmpB. tmRNA is encoded by the ssrA gene; the 2 termini fold to resemble tRNA(Ala) and it encodes a 'tag peptide', a short internal open reading frame. During trans-translation Ala-aminoacylated tmRNA acts like a tRNA, entering the A-site of stalled ribosomes, displacing the stalled mRNA. The ribosome then switches to translate the ORF on the tmRNA; the nascent peptide is terminated with the 'tag peptide' encoded by the tmRNA and targeted for degradation. The ribosome is freed to recommence translation, which seems to be the essential function of trans-translation. In Aliivibrio salmonicida (strain LFI1238) (Vibrio salmonicida (strain LFI1238)), this protein is SsrA-binding protein.